Here is a 75-residue protein sequence, read N- to C-terminus: Rugosin-LK2 (75 aa).

The N-terminal stretch at M1 to G24 is a signal peptide. Residues E25–E40 constitute a propeptide that is removed on maturation.

Expressed by the skin glands.

The protein localises to the secreted. Has antimicrobial activity against Gram-positive bacteria S.aureus ATCC 2592 (MIC=10.0 uM), S.aureus ATCC 43300 (MIC=10.0 uM) and B.subtilis (MIC=30.0 uM), against Gram-negative bacteria E.coli ML-35P (MIC=10.0 uM), P.aeruginosa PA01 (MIC=2.5 uM) and P.aeruginosa ATCC 27853 (MIC=2.5 uM) and against fungus C.albicans ATCC 2002 (MIC=10.0 uM). In Limnonectes kuhlii (Kuhl's Creek frog), this protein is Rugosin-LK2.